Reading from the N-terminus, the 787-residue chain is Patatin-like phospholipase domain-containing protein OOU_Y34scaffold00095g16.3 (787 aa).

2 disordered regions span residues 47 to 69 (APDT…ARSF) and 137 to 164 (KVVG…PGRR). Residues 59 to 69 (ASPRSPSARSF) show a composition bias toward low complexity. A compositionally biased stretch (basic residues) spans 144 to 157 (HRQKKSSRRRKRSK). The helical transmembrane segment at 180-200 (WPFLLIVGAWIVGLAVTYLFT) threads the bilayer. Residues 375 to 566 (LCLSGGASFA…RTDIPIRALN (192 aa)) enclose the PNPLA domain. The short motif at 406 to 410 (GTSGG) is the GXSXG element. Ser-408 (nucleophile) is an active-site residue. The active-site Proton acceptor is the Asp-553. The interval 745 to 787 (GTDEEITTNDEMEFASDEKAVLTEDEGQFDGVTDNTEGSPLLK) is disordered. The segment covering 746–759 (TDEEITTNDEMEFA) has biased composition (acidic residues). Over residues 777–787 (TDNTEGSPLLK) the composition is skewed to polar residues.

The protein belongs to the PLPL family.

The protein localises to the membrane. Probable lipid hydrolase. This chain is Patatin-like phospholipase domain-containing protein OOU_Y34scaffold00095g16.3, found in Pyricularia oryzae (strain Y34) (Rice blast fungus).